The primary structure comprises 188 residues: Small ribosomal subunit protein bS18c (188 aa).

Residues 1–19 show a composition bias toward low complexity; the sequence is MNNQSFNNFSQVNSNSSFF. The segment at 1–79 is disordered; the sequence is MNNQSFNNFS…TSNKRKVLSV (79 aa). A compositionally biased stretch (polar residues) spans 25 to 71; sequence NLQNTNLEMTNGTNPPSSFSKQTPQKRQSFGTNTNFSKGNSSRGSTS.

The protein belongs to the bacterial ribosomal protein bS18 family. As to quaternary structure, part of the 30S ribosomal subunit.

The protein resides in the plastid. Its subcellular location is the chloroplast. The sequence is that of Small ribosomal subunit protein bS18c from Tetradesmus obliquus (Green alga).